The sequence spans 112 residues: Ig kappa chain V-II region 2S1.3 (112 aa).

Residues 1–23 (DIVMTQAAFSNPVTLGTSASFSC) form a framework-1 region. Cysteine 23 and cysteine 93 are joined by a disulfide. The interval 24 to 39 (RSSKSLQQSKGITYLY) is complementarity-determining-1. A framework-2 region spans residues 40–54 (WYLQKPGQSPQLLIY). The tract at residues 55-61 (QMSNLAS) is complementarity-determining-2. The tract at residues 62 to 93 (GVPDRFSGSGSGTDFTLRISRVEAEDVGVYYC) is framework-3. The complementarity-determining-3 stretch occupies residues 94-102 (ANLQELPYT). Positions 103-112 (FGGGTKLEIK) are framework-4.

In Mus musculus (Mouse), this protein is Ig kappa chain V-II region 2S1.3.